Reading from the N-terminus, the 208-residue chain is Protein TIC 20-II, chloroplastic (208 aa).

The N-terminal 49 residues, 1–49 (MASLCLSLHQTLTNPLSAPRCRPLSLSFPGSSTFSIRPSSRRATALTTR), are a transit peptide targeting the chloroplast. The next 4 helical transmembrane spans lie at 61 to 83 (VISI…FLFA), 101 to 121 (LYRS…LGVV), 134 to 154 (AMQA…TRIL), and 172 to 192 (TGVF…SLLG).

It belongs to the Tic20 family. In terms of assembly, part of the Tic complex. As to expression, expressed in leaves, siliques and roots.

It is found in the plastid. It localises to the chloroplast inner membrane. In terms of biological role, may be involved in protein precursor import into chloroplasts. Not redundant with TIC20-I, TIC20-IV or TIC20-V. In Arabidopsis thaliana (Mouse-ear cress), this protein is Protein TIC 20-II, chloroplastic (TIC20-II).